The primary structure comprises 332 residues: Oligopeptide transport ATP-binding protein OppF (332 aa).

An ABC transporter domain is found at Lys-23–Met-264. Gly-56 to Ser-63 is an ATP binding site.

It belongs to the ABC transporter superfamily. The complex is composed of two ATP-binding proteins (OppD and OppF), two transmembrane proteins (OppB and OppC) and a solute-binding protein (OppA).

The protein resides in the cell inner membrane. It carries out the reaction a [peptide](out) + ATP + H2O = a [peptide](in) + ADP + phosphate + H(+). Functionally, part of the ABC transporter complex OppABCDF involved in the uptake of oligopeptides. Probably responsible for energy coupling to the transport system. The chain is Oligopeptide transport ATP-binding protein OppF (oppF) from Haemophilus influenzae (strain ATCC 51907 / DSM 11121 / KW20 / Rd).